The primary structure comprises 616 residues: MIPLRSSVTTQGRNAAGARALWRAAGLKDGDFNKPIIAIANSYTQFVPGHVHLKDVGDIVAGAIREAGGVPREFNTIAVDDGIAMGHGGMLYSLPSREIISDSVEYMVNAHAADAIVCISNCDKITPGMLNAAMRLNIPAIFVSGGPMEAGKAVVVDGVAHTPTDLITAISASANDSVDDRGLSIVENSACPTCGSCSGMFTANSMNSLTEALGLSLPGNGSTLATHAARRALFENAGRTIVDMCQRYYNHDDDSVLPRNVANKHAFDNAMTLDMAMGGSTNTVLHILAAAQEGDIDFDLADIDRLSREVPCLSKVAPNSNYHMEDVHRAGGIPAILGELNRAGLLHDDVHAVHAQSLSDWLATWDIRTDNPTQIALDLFHAAPGGVRTTVPFSTDNKWDELDTDSENGCIRDVDHAYTADGGLVILRGNLAEDGAVIKAAGIDESLWHFSGPAHVLESQEDAVNAILNKQIKPGEVVVIRYEGPAGGPGMQEMLHPTAFLKGAGLGTQCALITDGRFSGGSSGISVGHISPEAAHGGLIGLIHDGDTVTIDVHKRQLTLDVPEDVLAERREKMNVSEHPWRPLNRQRRVSKALQAYASMATSADTGAVRKVNDRR.

Asp-81 lines the Mg(2+) pocket. Residue Cys-122 coordinates [2Fe-2S] cluster. Mg(2+) is bound by residues Asp-123 and Lys-124. Lys-124 carries the post-translational modification N6-carboxylysine. Cys-197 is a binding site for [2Fe-2S] cluster. Residue Glu-493 participates in Mg(2+) binding. Residue Ser-519 is the Proton acceptor of the active site.

The protein belongs to the IlvD/Edd family. Homodimer. [2Fe-2S] cluster is required as a cofactor. It depends on Mg(2+) as a cofactor.

The enzyme catalyses (2R)-2,3-dihydroxy-3-methylbutanoate = 3-methyl-2-oxobutanoate + H2O. It carries out the reaction (2R,3R)-2,3-dihydroxy-3-methylpentanoate = (S)-3-methyl-2-oxopentanoate + H2O. It functions in the pathway amino-acid biosynthesis; L-isoleucine biosynthesis; L-isoleucine from 2-oxobutanoate: step 3/4. The protein operates within amino-acid biosynthesis; L-valine biosynthesis; L-valine from pyruvate: step 3/4. In terms of biological role, functions in the biosynthesis of branched-chain amino acids. Catalyzes the dehydration of (2R,3R)-2,3-dihydroxy-3-methylpentanoate (2,3-dihydroxy-3-methylvalerate) into 2-oxo-3-methylpentanoate (2-oxo-3-methylvalerate) and of (2R)-2,3-dihydroxy-3-methylbutanoate (2,3-dihydroxyisovalerate) into 2-oxo-3-methylbutanoate (2-oxoisovalerate), the penultimate precursor to L-isoleucine and L-valine, respectively. The sequence is that of Dihydroxy-acid dehydratase from Corynebacterium kroppenstedtii (strain DSM 44385 / JCM 11950 / CIP 105744 / CCUG 35717).